Reading from the N-terminus, the 875-residue chain is Alanine--tRNA ligase (875 aa).

Zn(2+)-binding residues include His596, His600, Cys700, and His704.

The protein belongs to the class-II aminoacyl-tRNA synthetase family. Zn(2+) is required as a cofactor.

Its subcellular location is the cytoplasm. It catalyses the reaction tRNA(Ala) + L-alanine + ATP = L-alanyl-tRNA(Ala) + AMP + diphosphate. In terms of biological role, catalyzes the attachment of alanine to tRNA(Ala) in a two-step reaction: alanine is first activated by ATP to form Ala-AMP and then transferred to the acceptor end of tRNA(Ala). Also edits incorrectly charged Ser-tRNA(Ala) and Gly-tRNA(Ala) via its editing domain. This is Alanine--tRNA ligase from Methanocella arvoryzae (strain DSM 22066 / NBRC 105507 / MRE50).